Consider the following 442-residue polypeptide: Cysteine proteinase 4 (442 aa).

The signal sequence occupies residues 1–17 (MRVLSFLCLLLVSYASA). The propeptide at 18 to 111 (KQQFSELQYR…TEEEKIFSTP (94 aa)) is activation peptide. Disulfide bonds link Cys-132–Cys-178 and Cys-169–Cys-212. Cys-135 is an active-site residue. N-linked (GlcNAc...) asparagine glycans are attached at residues Asn-228 and Asn-254. Cys-270 and Cys-428 are oxidised to a cystine. His-277 is an active-site residue. Residues 286 to 396 (SGSSSSSGSS…SGSGSGAVEA (111 aa)) form a disordered region. Low complexity predominate over residues 287–376 (GSSSSSGSSS…SASGQASASG (90 aa)). Residues 377-391 (SGSGSGSGSGSGSGS) are compositionally biased toward gly residues. Asn-406 is an active-site residue.

This sequence belongs to the peptidase C1 family. Glycosylated; contains GlcNAc-alpha-1-P-Ser residues and fucose.

Its subcellular location is the lysosome. The sequence is that of Cysteine proteinase 4 (cprD) from Dictyostelium discoideum (Social amoeba).